Here is a 192-residue protein sequence, read N- to C-terminus: Ciliary microtubule-associated protein 3 (192 aa).

As to quaternary structure, interacts with proteins involved in ciliary transport, including ARL13B, CETN1, KIF3A, RAB6A, RAB8A, TUBB1 and TUBG1. Interacts with AURKA.

It is found in the cytoplasmic vesicle. The protein resides in the golgi apparatus. It localises to the trans-Golgi network. The protein localises to the cytoplasm. Functionally, during primary cilia disassembly, involved in cilia disassembly. Required specifically to control cilia retraction as well as the liberation and duplication of the basal body/centrosome. May act by stimulating AURKA activity at the basal body in a cell cycle-dependent manner. The polypeptide is Ciliary microtubule-associated protein 3 (CIMAP3) (Bos taurus (Bovine)).